A 1588-amino-acid polypeptide reads, in one-letter code: Paternally-expressed gene 3 protein (1588 aa).

Residues 46-128 (HQRFRNLIYV…TLLENYKEMY (83 aa)) enclose the SCAN box domain. Disordered regions lie at residues 128 to 230 (YQPE…ESYQ), 266 to 306 (DGHS…RRGI), and 319 to 349 (KFIK…MSDD). Acidic residues predominate over residues 129–142 (QPEDDNNSDVTSDD). 4 stretches are compositionally biased toward basic and acidic residues: residues 143 to 152 (DMTRNRRESS), 161 to 182 (SGDR…DRWS), 206 to 225 (FEMD…RSQD), and 295 to 306 (PEAKKSTHRRGI). 3 C2H2-type zinc fingers span residues 454–476 (YVCD…QIMH), 507–529 (FECK…RKIH), and 565–587 (YECR…QKIH). Over residues 588–607 (FGDDKDNEREHERERERGET) the composition is skewed to basic and acidic residues. The tract at residues 588–610 (FGDDKDNEREHERERERGETFRP) is disordered. A C2H2-type 4 zinc finger spans residues 627–649 (YECKVCGETFLHSSSLKEHQKIH). A disordered region spans residues 838–930 (LVASKPPRSH…EFSVPSSNVR (93 aa)). The segment covering 868–881 (LNDKRQKIPARENP) has biased composition (basic and acidic residues). A C2H2-type 5 zinc finger spans residues 969-991 (YECQECGECFAHSSDLTEHQKIH). Residues 1056–1104 (EKSHGEESQGENTDGEETHSEETHGQETIEDPVIQGSDMEDPQKDDPDD) are disordered. Over residues 1071-1082 (EETHSEETHGQE) the composition is skewed to basic and acidic residues. 5 consecutive C2H2-type zinc fingers follow at residues 1107–1129 (YECE…QKVH), 1163–1185 (YECP…QRIH), 1225–1247 (IRCL…MRLH), 1282–1304 (FECA…VTVH), and 1332–1354 (YECK…KELH). A disordered region spans residues 1393-1495 (EAAEPEVEAX…GIEDPEEGED (103 aa)). Acidic residues predominate over residues 1395-1415 (AEPEVEAXEPEVEAAEPEVEA). 7 consecutive repeat copies span residues 1397-1403 (PEVEAXE), 1404-1410 (PEVEAAE), 1411-1417 (PEVEAAE), 1418-1422 (PNGEA), 1425-1429 (PDGEA), 1432-1436 (PIGEA), and 1439-1443 (PNGEA). The 3 X 7 AA repeat of P-E-V-E-A-A-E stretch occupies residues 1397-1417 (PEVEAXEPEVEAAEPEVEAAE). Residues 1418 to 1443 (PNGEAEGPDGEAAEPIGEAGQPNGEA) form a 4 X 5 AA repeat of P-X-G-E-A region. Acidic residues-rich tracts occupy residues 1449–1466 (DADE…ERAE) and 1475–1495 (PEGD…EGED). C2H2-type zinc fingers lie at residues 1505–1527 (YDCH…LKTH) and 1564–1586 (FKCD…QNTH).

The protein belongs to the krueppel C2H2-type zinc-finger protein family. In terms of assembly, homodimer. Interacts with SIAH1A and SIAH2. Interacts with TRAF2.

It localises to the nucleus. Its subcellular location is the cytoplasm. In terms of biological role, induces apoptosis in cooperation with SIAH1A. Acts as a mediator between p53/TP53 and BAX in a neuronal death pathway that is activated by DNA damage. Acts synergistically with TRAF2 and inhibits TNF induced apoptosis through activation of NF-kappa-B. This chain is Paternally-expressed gene 3 protein (PEG3), found in Pan paniscus (Pygmy chimpanzee).